Consider the following 418-residue polypeptide: Gamma-glutamyl phosphate reductase (418 aa).

The protein belongs to the gamma-glutamyl phosphate reductase family.

Its subcellular location is the cytoplasm. The enzyme catalyses L-glutamate 5-semialdehyde + phosphate + NADP(+) = L-glutamyl 5-phosphate + NADPH + H(+). It participates in amino-acid biosynthesis; L-proline biosynthesis; L-glutamate 5-semialdehyde from L-glutamate: step 2/2. Catalyzes the NADPH-dependent reduction of L-glutamate 5-phosphate into L-glutamate 5-semialdehyde and phosphate. The product spontaneously undergoes cyclization to form 1-pyrroline-5-carboxylate. The protein is Gamma-glutamyl phosphate reductase of Thermodesulfovibrio yellowstonii (strain ATCC 51303 / DSM 11347 / YP87).